The sequence spans 128 residues: Small ribosomal subunit protein uS12 (128 aa).

The disordered stretch occupies residues 1–30; sequence MPTINQLIRKGREPKERKSKSPALMGNPQK. 3-methylthioaspartic acid is present on Asp89. The segment at 106–128 is disordered; it reads GVEGRKQGRSKYGTKRPKEGGKK.

It belongs to the universal ribosomal protein uS12 family. In terms of assembly, part of the 30S ribosomal subunit. Contacts proteins S8 and S17. May interact with IF1 in the 30S initiation complex.

Functionally, with S4 and S5 plays an important role in translational accuracy. Interacts with and stabilizes bases of the 16S rRNA that are involved in tRNA selection in the A site and with the mRNA backbone. Located at the interface of the 30S and 50S subunits, it traverses the body of the 30S subunit contacting proteins on the other side and probably holding the rRNA structure together. The combined cluster of proteins S8, S12 and S17 appears to hold together the shoulder and platform of the 30S subunit. The polypeptide is Small ribosomal subunit protein uS12 (Dictyoglomus thermophilum (strain ATCC 35947 / DSM 3960 / H-6-12)).